A 231-amino-acid polypeptide reads, in one-letter code: 7-cyano-7-deazaguanine synthase (231 aa).

8 to 18 serves as a coordination point for ATP; that stretch reads FSGGQDSTTCL. Residues Cys187, Cys196, Cys199, and Cys202 each coordinate Zn(2+).

It belongs to the QueC family. Zn(2+) serves as cofactor.

The catalysed reaction is 7-carboxy-7-deazaguanine + NH4(+) + ATP = 7-cyano-7-deazaguanine + ADP + phosphate + H2O + H(+). It participates in purine metabolism; 7-cyano-7-deazaguanine biosynthesis. Functionally, catalyzes the ATP-dependent conversion of 7-carboxy-7-deazaguanine (CDG) to 7-cyano-7-deazaguanine (preQ(0)). This chain is 7-cyano-7-deazaguanine synthase, found in Vibrio vulnificus (strain CMCP6).